Consider the following 348-residue polypeptide: L-threonine 3-dehydrogenase (348 aa).

Cys42 contacts Zn(2+). Active-site charge relay system residues include Thr44 and His47. 6 residues coordinate Zn(2+): His67, Glu68, Cys97, Cys100, Cys103, and Cys111. Residues Leu179, Glu199, Arg204, Leu266–Leu268, and Ile291–Thr292 each bind NAD(+).

The protein belongs to the zinc-containing alcohol dehydrogenase family. Homotetramer. Zn(2+) serves as cofactor.

The protein localises to the cytoplasm. The enzyme catalyses L-threonine + NAD(+) = (2S)-2-amino-3-oxobutanoate + NADH + H(+). It functions in the pathway amino-acid degradation; L-threonine degradation via oxydo-reductase pathway; glycine from L-threonine: step 1/2. Functionally, catalyzes the NAD(+)-dependent oxidation of L-threonine to 2-amino-3-ketobutyrate. This is L-threonine 3-dehydrogenase from Pyrococcus abyssi (strain GE5 / Orsay).